A 786-amino-acid polypeptide reads, in one-letter code: Wall-associated receptor kinase-like 17 (786 aa).

The first 30 residues, 1 to 30, serve as a signal peptide directing secretion; that stretch reads MSYKNTNNSHLILFKLLLLLILYSADLTAS. Topologically, residues 31–369 are extracellular; sequence SSCRSECGGC…YRCVGDKTKA (339 aa). Asparagine 69, asparagine 122, asparagine 160, asparagine 165, and asparagine 274 each carry an N-linked (GlcNAc...) asparagine glycan. The tract at residues 301 to 362 is atypical EGF-like; it reads CICDYTMSII…CVNFEGGYRC (62 aa). Cystine bridges form between cysteine 303/cysteine 318, cysteine 340/cysteine 353, and cysteine 347/cysteine 362. Residues 370–390 traverse the membrane as a helical segment; the sequence is IMIGAGTGFGVLVLVGGVWWL. At 391 to 786 the chain is on the cytoplasmic side; sequence RKFLVKRRMA…VEPLNPLLTW (396 aa). Threonine 433 carries the phosphothreonine modification. In terms of domain architecture, Protein kinase spans 444–719; it reads FSENRVLGHG…REVFTELERI (276 aa). ATP-binding positions include 450–458 and lysine 472; that span reads LGHGGQGTV. Tyrosine 517 is modified (phosphotyrosine). The active-site Proton acceptor is aspartate 570. Phosphothreonine is present on residues threonine 604 and threonine 609. A Phosphotyrosine modification is found at tyrosine 617. Over residues 766–775 the composition is skewed to low complexity; the sequence is SSIVASPPSS. Positions 766 to 786 are disordered; it reads SSIVASPPSSDVEPLNPLLTW.

This sequence belongs to the protein kinase superfamily. Ser/Thr protein kinase family.

It is found in the membrane. The catalysed reaction is L-seryl-[protein] + ATP = O-phospho-L-seryl-[protein] + ADP + H(+). It carries out the reaction L-threonyl-[protein] + ATP = O-phospho-L-threonyl-[protein] + ADP + H(+). Functionally, serine/threonine-protein kinase that may function as a signaling receptor of extracellular matrix component. In Arabidopsis thaliana (Mouse-ear cress), this protein is Wall-associated receptor kinase-like 17 (WAKL17).